A 62-amino-acid chain; its full sequence is Conorfamide-Tx1 (62 aa).

The first 19 residues, 1 to 19 (MSGRGFLLLALLLLVTVEA), serve as a signal peptide directing secretion. A propeptide spanning residues 20–26 (TKVEKNK) is cleaved from the precursor. Y46 bears the Tyrosine amide mark. The propeptide occupies 47 to 62 (GRRDMQSPLLSERLRF).

The protein belongs to the FARP (FMRFamide related peptide) family. Expressed by the venom duct.

It is found in the secreted. Its function is as follows. This peptide does not show activity on human and mouse sensory neuron-specific G-protein coupled receptors MRGPRX1. This Conus textile (Cloth-of-gold cone) protein is Conorfamide-Tx1.